We begin with the raw amino-acid sequence, 887 residues long: DNA gyrase subunit A (887 aa).

The Topo IIA-type catalytic domain maps to 35 to 501 (LPDVRDGLKP…GFENLEDEDL (467 aa)). The active-site O-(5'-phospho-DNA)-tyrosine intermediate is Tyr-123. The GyrA-box signature appears at 528 to 534 (QNRGGRG). Residues 811-864 (KEDAEDETNEDEQSTSTVSEDGTEQQREAVVNDETPGNAIHTEVIDSEENDEDG) are disordered. Positions 813 to 823 (DAEDETNEDEQ) are enriched in acidic residues.

It belongs to the type II topoisomerase GyrA/ParC subunit family. Heterotetramer, composed of two GyrA and two GyrB chains. In the heterotetramer, GyrA contains the active site tyrosine that forms a transient covalent intermediate with DNA, while GyrB binds cofactors and catalyzes ATP hydrolysis.

The protein resides in the cytoplasm. It catalyses the reaction ATP-dependent breakage, passage and rejoining of double-stranded DNA.. Functionally, a type II topoisomerase that negatively supercoils closed circular double-stranded (ds) DNA in an ATP-dependent manner to modulate DNA topology and maintain chromosomes in an underwound state. Negative supercoiling favors strand separation, and DNA replication, transcription, recombination and repair, all of which involve strand separation. Also able to catalyze the interconversion of other topological isomers of dsDNA rings, including catenanes and knotted rings. Type II topoisomerases break and join 2 DNA strands simultaneously in an ATP-dependent manner. The protein is DNA gyrase subunit A of Staphylococcus aureus (strain COL).